Here is an 800-residue protein sequence, read N- to C-terminus: Nuclear cap-binding protein subunit 1 (800 aa).

The disordered stretch occupies residues 1 to 26 (MSRRRAHDTEDEGYDHRRNKRRRVSE). The residue at position 9 (Thr9) is a Phosphothreonine. One can recognise an MIF4G domain in the interval 31–243 (EDRLESLILR…CLWAQIRKLR (213 aa)). The segment at 669–700 (LAKADSSSSDSEDDSSHKRKKPITHADKPSEE) is disordered.

This sequence belongs to the NCBP1 family. In terms of assembly, component of the nuclear cap-binding complex (CBC), a heterodimer composed of Cbp80 and Cbp20 that interacts with m7GpppG-capped RNA.

The protein localises to the nucleus. In terms of biological role, component of the cap-binding complex (CBC), which binds cotranscriptionally to the 5'-cap of pre-mRNAs and is involved in various processes such as pre-mRNA splicing and RNA-mediated gene silencing (RNAi). The CBC complex is involved in miRNA-mediated RNA interference via its interaction with Ars2 and is required for primary microRNAs (miRNAs) processing. Also involved in innate immunity via the short interfering RNAs (siRNAs) processing machinery by restricting the viral RNA production. In the CBC complex, Cbp80 does not bind directly capped RNAs (m7GpppG-capped RNA) but is required to stabilize the movement of the N-terminal loop of Cbp20 and lock the CBC into a high affinity cap-binding state with the cap structure. The chain is Nuclear cap-binding protein subunit 1 (Cbp80) from Drosophila melanogaster (Fruit fly).